We begin with the raw amino-acid sequence, 265 residues long: Hemin import ATP-binding protein HmuV (265 aa).

The 237-residue stretch at 13-249 (LKASNLHLQL…TAVENVYGWP (237 aa)) folds into the ABC transporter domain. Position 45 to 52 (45 to 52 (GPNGAGKS)) interacts with ATP.

This sequence belongs to the ABC transporter superfamily. Heme (hemin) importer (TC 3.A.1.14.5) family. In terms of assembly, the complex is composed of two ATP-binding proteins (HmuV), two transmembrane proteins (HmuU) and a solute-binding protein (HmuT).

The protein resides in the cell inner membrane. Its function is as follows. Part of the ABC transporter complex HmuTUV involved in hemin import. Responsible for energy coupling to the transport system. In Photobacterium damselae subsp. damselae (Listonella damsela), this protein is Hemin import ATP-binding protein HmuV.